A 1582-amino-acid polypeptide reads, in one-letter code: Sca1 complex scaffold protein scaA (1582 aa).

Composition is skewed to low complexity over residues 1–14 (MSSL…TPST) and 109–131 (LSPS…TTST). 2 disordered regions span residues 1 to 22 (MSSL…TFSK) and 108 to 147 (GLSP…QIKK). The TPR 1 repeat unit spans residues 4-37 (LDPSLSTTPSTNRRGTFSKAKSFRRAALNLEPQG). A TPR 2 repeat occupies 166-199 (IYTSFPESMAFDDYMDYEESLVEWKRQVEQNLGI). Residues 246 to 349 (IKETNSSVND…PSTGSLAGFV (104 aa)) form a disordered region. Polar residues-rich tracts occupy residues 249 to 267 (TNSS…PTLR), 288 to 310 (NKDN…NSGI), and 318 to 332 (SDTS…QLDG). S359 bears the Phosphoserine; by PKB mark. Positions 400 to 600 (RSGSGFGMDH…QRQTSTWFRG (201 aa)) are gefA and gefH binding. Disordered stretches follow at residues 468–493 (PKNS…GVGG) and 686–734 (SLSS…DKDK). Gly residues-rich tracts occupy residues 478–493 (GSGG…GVGG) and 694–714 (QQQG…GSGS). The segment covering 715–726 (GLNMSGTSGSSG) has biased composition (low complexity). The stretch at 742–777 (MHSINNTTNVGTKEDRRQYTKILQTYEQRLQFSFRL) is one TPR 3 repeat. Residues 864-875 (GGGSGGASGGGI) show a composition bias toward gly residues. Residues 864–978 (GGGSGGASGG…GSISTHPNTP (115 aa)) are disordered. Positions 903-928 (HIPSGSSLLSSPPNRQGSTGSFSFIG) are enriched in low complexity. Residues 940–953 (NSSSLESPRTQSQL) show a composition bias toward polar residues. Over residues 960-972 (GSSPRSHSGGSIS) the composition is skewed to low complexity. The pppA and pho2B binding stretch occupies residues 1000–1400 (FLDLTNEKLA…SIKKEGNLYN (401 aa)). One copy of the TPR 4 repeat lies at 1080–1113 (TQEVVRLVFVYYYLGIIQERLNFFSNNVGILGFV).

In terms of assembly, component of the Sca1 complex composed of at least gefA, gefH, scaA, phr, and the protein phosphatase 2A subunits pppA and pho2B. In terms of processing, phosphorylated at Ser-359 by PKB and PKBR1 is induced by chemoattractant.

Its subcellular location is the cell membrane. Component of the Sca1 complex, a regulator of cell motility, chemotaxis and signal relay. The Sca1 complex is recruited to the plasma membrane in a chemoattractant- and F-actin-dependent manner and is enriched at the leading edge of chemotaxing cells where it regulates F-actin dynamics and signal relay by controlling the activation of rasC and the downstream target of rapamycin complex 2 (TORC2)-Akt/protein kinase B (PKB) pathway. ScaA acts as a molecular scaffold, bringing together gefA, gefH and phr with PP2A. This Dictyostelium discoideum (Social amoeba) protein is Sca1 complex scaffold protein scaA.